Reading from the N-terminus, the 166-residue chain is Large ribosomal subunit protein uL10 (166 aa).

Belongs to the universal ribosomal protein uL10 family. In terms of assembly, part of the ribosomal stalk of the 50S ribosomal subunit. The N-terminus interacts with L11 and the large rRNA to form the base of the stalk. The C-terminus forms an elongated spine to which L12 dimers bind in a sequential fashion forming a multimeric L10(L12)X complex.

Its function is as follows. Forms part of the ribosomal stalk, playing a central role in the interaction of the ribosome with GTP-bound translation factors. The sequence is that of Large ribosomal subunit protein uL10 from Streptococcus sanguinis (strain SK36).